We begin with the raw amino-acid sequence, 258 residues long: Regulatory protein RecX (258 aa).

This sequence belongs to the RecX family.

It is found in the cytoplasm. Functionally, modulates RecA activity. The protein is Regulatory protein RecX of Streptococcus pneumoniae (strain 70585).